Consider the following 365-residue polypeptide: tRNA/tmRNA (uracil-C(5))-methyltransferase (365 aa).

Residues Q189, Y217, N222, E238, and D298 each coordinate S-adenosyl-L-methionine. The active-site Nucleophile is the C323. E357 acts as the Proton acceptor in catalysis.

Belongs to the class I-like SAM-binding methyltransferase superfamily. RNA M5U methyltransferase family. TrmA subfamily.

The catalysed reaction is uridine(54) in tRNA + S-adenosyl-L-methionine = 5-methyluridine(54) in tRNA + S-adenosyl-L-homocysteine + H(+). The enzyme catalyses uridine(341) in tmRNA + S-adenosyl-L-methionine = 5-methyluridine(341) in tmRNA + S-adenosyl-L-homocysteine + H(+). Functionally, dual-specificity methyltransferase that catalyzes the formation of 5-methyluridine at position 54 (m5U54) in all tRNAs, and that of position 341 (m5U341) in tmRNA (transfer-mRNA). This Pasteurella multocida (strain Pm70) protein is tRNA/tmRNA (uracil-C(5))-methyltransferase.